Here is a 540-residue protein sequence, read N- to C-terminus: MTAQIPYQHSSGYISHFHNNELDAGRGRDYNVTIKYLDDKEENIEGQAAKISHNASLHIPVLLCLVISLGGFIFGWDIGTIGGMTNMVSFQEKFGTTNIIHDDETIFVSTKKLTDLQIGLIISIFNISCGVGALTLSKIGDWIGRKGGIWFALVVYCIGITIQILSYGRWYFLTLGRAVTGIGVGVTTVLVPMFLSENSPLKIRGSMVSTYQLIVTFGILMGNILNFICERCYKDPTQNIAWQLPLFLGYIWAIIIGMSLVYVPESPQYLAKIKNDVPSAKYSFARMNGIPATDSMVIEFIDDLLENNYNNEETNNESKKQSLVKRNTFEFIMGKPKLWLRLIIGMMIMAFQQLSGINYFFYYGTSVFKGVGIKDPYITSIILSSVNFLSTILGIYYVEKWGHKTCLLYGSTNLLFYMMTYATVGTFGRETDFSNIVLIIVTCCFIFWFAITLGPVTFVLVSELFPLRTRAISMAICTFINWMFNFLISLLTPMIVSKIDFKLGYIFAACLLALIIFSWILVPETRKKNEQEINKIFEPE.

Residues 1-56 (MTAQIPYQHSSGYISHFHNNELDAGRGRDYNVTIKYLDDKEENIEGQAAKISHNAS) lie on the Cytoplasmic side of the membrane. Residues 57-76 (LHIPVLLCLVISLGGFIFGW) form a helical membrane-spanning segment. Topologically, residues 77–119 (DIGTIGGMTNMVSFQEKFGTTNIIHDDETIFVSTKKLTDLQIG) are extracellular. Residues 120–140 (LIISIFNISCGVGALTLSKIG) traverse the membrane as a helical segment. At 141–146 (DWIGRK) the chain is on the cytoplasmic side. A helical transmembrane segment spans residues 147-167 (GGIWFALVVYCIGITIQILSY). The Extracellular portion of the chain corresponds to 168–177 (GRWYFLTLGR). Residues 178–198 (AVTGIGVGVTTVLVPMFLSEN) traverse the membrane as a helical segment. Residues 199–204 (SPLKIR) lie on the Cytoplasmic side of the membrane. Residues 205–225 (GSMVSTYQLIVTFGILMGNIL) traverse the membrane as a helical segment. The Extracellular portion of the chain corresponds to 226–243 (NFICERCYKDPTQNIAWQ). Residues 244–264 (LPLFLGYIWAIIIGMSLVYVP) form a helical membrane-spanning segment. The Cytoplasmic portion of the chain corresponds to 265-357 (ESPQYLAKIK…IMAFQQLSGI (93 aa)). A helical membrane pass occupies residues 358–374 (NYFFYYGTSVFKGVGIK). The Extracellular portion of the chain corresponds to 375–380 (DPYITS). A helical transmembrane segment spans residues 381-398 (IILSSVNFLSTILGIYYV). The Cytoplasmic segment spans residues 399-405 (EKWGHKT). A helical membrane pass occupies residues 406-426 (CLLYGSTNLLFYMMTYATVGT). Residues 427 to 440 (FGRETDFSNIVLII) are Extracellular-facing. Residues 441-461 (VTCCFIFWFAITLGPVTFVLV) traverse the membrane as a helical segment. At 462–478 (SELFPLRTRAISMAICT) the chain is on the cytoplasmic side. Residues 479 to 499 (FINWMFNFLISLLTPMIVSKI) traverse the membrane as a helical segment. Position 500 (Asp-500) is a topological domain, extracellular. A helical membrane pass occupies residues 501 to 521 (FKLGYIFAACLLALIIFSWIL). The Cytoplasmic portion of the chain corresponds to 522–540 (VPETRKKNEQEINKIFEPE).

The protein belongs to the major facilitator superfamily. Sugar transporter (TC 2.A.1.1) family.

The protein resides in the membrane. In terms of biological role, probable glucose transporter. This chain is Hexose transporter HXT14 (HXT14), found in Saccharomyces cerevisiae (strain ATCC 204508 / S288c) (Baker's yeast).